We begin with the raw amino-acid sequence, 910 residues long: Protein translocase subunit SecA (910 aa).

ATP contacts are provided by residues glutamine 89, 107 to 111 (GEGKT), and aspartate 502. Positions 894, 896, 905, and 906 each coordinate Zn(2+).

It belongs to the SecA family. As to quaternary structure, monomer and homodimer. Part of the essential Sec protein translocation apparatus which comprises SecA, SecYEG and auxiliary proteins SecDF-YajC and YidC. Zn(2+) serves as cofactor.

Its subcellular location is the cell inner membrane. It is found in the cytoplasm. It carries out the reaction ATP + H2O + cellular proteinSide 1 = ADP + phosphate + cellular proteinSide 2.. Its function is as follows. Part of the Sec protein translocase complex. Interacts with the SecYEG preprotein conducting channel. Has a central role in coupling the hydrolysis of ATP to the transfer of proteins into and across the cell membrane, serving both as a receptor for the preprotein-SecB complex and as an ATP-driven molecular motor driving the stepwise translocation of polypeptide chains across the membrane. This Mesorhizobium japonicum (strain LMG 29417 / CECT 9101 / MAFF 303099) (Mesorhizobium loti (strain MAFF 303099)) protein is Protein translocase subunit SecA.